A 320-amino-acid polypeptide reads, in one-letter code: Cytochrome f (320 aa).

The first 35 residues, 1-35 (MQNRNTFSWVKDQMSRFISVSIMIYVITRTSISNA), serve as a signal peptide directing secretion. 4 residues coordinate heme: Tyr-36, Cys-56, Cys-59, and His-60. The helical transmembrane segment at 286-306 (VQGLLFFFASVILAQIFLVLK) threads the bilayer.

This sequence belongs to the cytochrome f family. As to quaternary structure, the 4 large subunits of the cytochrome b6-f complex are cytochrome b6, subunit IV (17 kDa polypeptide, petD), cytochrome f and the Rieske protein, while the 4 small subunits are PetG, PetL, PetM and PetN. The complex functions as a dimer. Heme serves as cofactor.

Its subcellular location is the plastid. The protein resides in the chloroplast thylakoid membrane. Component of the cytochrome b6-f complex, which mediates electron transfer between photosystem II (PSII) and photosystem I (PSI), cyclic electron flow around PSI, and state transitions. This Ceratophyllum demersum (Rigid hornwort) protein is Cytochrome f.